A 528-amino-acid polypeptide reads, in one-letter code: GMP synthase [glutamine-hydrolyzing] (528 aa).

The Glutamine amidotransferase type-1 domain occupies 13–204 (AIVILDFGSQ…VYHICGCEPD (192 aa)). Catalysis depends on cysteine 90, which acts as the Nucleophile. Catalysis depends on residues histidine 178 and glutamate 180. In terms of domain architecture, GMPS ATP-PPase spans 205 to 403 (WTTEAFIDEA…LGLPEEIVSR (199 aa)). 232 to 238 (SGGVDSS) contacts ATP.

In terms of assembly, homodimer.

The enzyme catalyses XMP + L-glutamine + ATP + H2O = GMP + L-glutamate + AMP + diphosphate + 2 H(+). The protein operates within purine metabolism; GMP biosynthesis; GMP from XMP (L-Gln route): step 1/1. Its function is as follows. Catalyzes the synthesis of GMP from XMP. The sequence is that of GMP synthase [glutamine-hydrolyzing] from Synechococcus sp. (strain CC9311).